Reading from the N-terminus, the 417-residue chain is NADH-quinone oxidoreductase subunit D (417 aa).

It belongs to the complex I 49 kDa subunit family. NDH-1 is composed of 14 different subunits. Subunits NuoB, C, D, E, F, and G constitute the peripheral sector of the complex.

It localises to the cell inner membrane. The enzyme catalyses a quinone + NADH + 5 H(+)(in) = a quinol + NAD(+) + 4 H(+)(out). Its function is as follows. NDH-1 shuttles electrons from NADH, via FMN and iron-sulfur (Fe-S) centers, to quinones in the respiratory chain. The immediate electron acceptor for the enzyme in this species is believed to be ubiquinone. Couples the redox reaction to proton translocation (for every two electrons transferred, four hydrogen ions are translocated across the cytoplasmic membrane), and thus conserves the redox energy in a proton gradient. This Nitrosospira multiformis (strain ATCC 25196 / NCIMB 11849 / C 71) protein is NADH-quinone oxidoreductase subunit D.